The primary structure comprises 206 residues: Small ribosomal subunit protein uS4 (206 aa).

Positions 96 to 156 (SRLDNVVYRM…NKSKNQSRIK (61 aa)) constitute an S4 RNA-binding domain.

This sequence belongs to the universal ribosomal protein uS4 family. Part of the 30S ribosomal subunit. Contacts protein S5. The interaction surface between S4 and S5 is involved in control of translational fidelity.

One of the primary rRNA binding proteins, it binds directly to 16S rRNA where it nucleates assembly of the body of the 30S subunit. Functionally, with S5 and S12 plays an important role in translational accuracy. This chain is Small ribosomal subunit protein uS4, found in Buchnera aphidicola subsp. Acyrthosiphon pisum (strain 5A).